We begin with the raw amino-acid sequence, 315 residues long: UDP-3-O-acyl-N-acetylglucosamine deacetylase (315 aa).

The Zn(2+) site is built by His-78, His-235, and Asp-239. His-262 (proton donor) is an active-site residue.

It belongs to the LpxC family. It depends on Zn(2+) as a cofactor.

It catalyses the reaction a UDP-3-O-[(3R)-3-hydroxyacyl]-N-acetyl-alpha-D-glucosamine + H2O = a UDP-3-O-[(3R)-3-hydroxyacyl]-alpha-D-glucosamine + acetate. Its pathway is glycolipid biosynthesis; lipid IV(A) biosynthesis; lipid IV(A) from (3R)-3-hydroxytetradecanoyl-[acyl-carrier-protein] and UDP-N-acetyl-alpha-D-glucosamine: step 2/6. Its function is as follows. Catalyzes the hydrolysis of UDP-3-O-myristoyl-N-acetylglucosamine to form UDP-3-O-myristoylglucosamine and acetate, the committed step in lipid A biosynthesis. In Syntrophus aciditrophicus (strain SB), this protein is UDP-3-O-acyl-N-acetylglucosamine deacetylase.